A 213-amino-acid polypeptide reads, in one-letter code: Glycerol-3-phosphate acyltransferase (213 aa).

Helical transmembrane passes span 3-23 (IIIL…GLWI), 48-68 (ILGV…GTLA), 71-91 (LPLI…LAVI), 119-139 (PFFL…FSMI), 144-164 (VVAA…GFIL), and 165-185 (TSYD…IIFR).

It belongs to the PlsY family. Probably interacts with PlsX.

It localises to the cell membrane. The enzyme catalyses an acyl phosphate + sn-glycerol 3-phosphate = a 1-acyl-sn-glycero-3-phosphate + phosphate. It functions in the pathway lipid metabolism; phospholipid metabolism. Its function is as follows. Catalyzes the transfer of an acyl group from acyl-phosphate (acyl-PO(4)) to glycerol-3-phosphate (G3P) to form lysophosphatidic acid (LPA). This enzyme utilizes acyl-phosphate as fatty acyl donor, but not acyl-CoA or acyl-ACP. This is Glycerol-3-phosphate acyltransferase from Lactococcus lactis subsp. cremoris (strain MG1363).